The primary structure comprises 125 residues: Histone H2A (125 aa).

The span at 1-18 shows a compositional bias: basic residues; the sequence is MSGRGKGGKAKGKSKSRS. The disordered stretch occupies residues 1–23; it reads MSGRGKGGKAKGKSKSRSSRAGL. Residue S2 is modified to N-acetylserine. At S2 the chain carries Phosphoserine. An N5-methylglutamine modification is found at Q104.

Belongs to the histone H2A family. As to quaternary structure, the nucleosome is a histone octamer containing two molecules each of H2A, H2B, H3 and H4 assembled in one H3-H4 heterotetramer and two H2A-H2B heterodimers. The octamer wraps approximately 147 bp of DNA.

Its subcellular location is the nucleus. It localises to the chromosome. Functionally, core component of nucleosome. Nucleosomes wrap and compact DNA into chromatin, limiting DNA accessibility to the cellular machineries which require DNA as a template. Histones thereby play a central role in transcription regulation, DNA repair, DNA replication and chromosomal stability. DNA accessibility is regulated via a complex set of post-translational modifications of histones, also called histone code, and nucleosome remodeling. The sequence is that of Histone H2A from Urechis caupo (Innkeeper worm).